We begin with the raw amino-acid sequence, 126 residues long: Holo-[acyl-carrier-protein] synthase (126 aa).

2 residues coordinate Mg(2+): Asp9 and Glu58.

It belongs to the P-Pant transferase superfamily. AcpS family. It depends on Mg(2+) as a cofactor.

The protein localises to the cytoplasm. The enzyme catalyses apo-[ACP] + CoA = holo-[ACP] + adenosine 3',5'-bisphosphate + H(+). Functionally, transfers the 4'-phosphopantetheine moiety from coenzyme A to a Ser of acyl-carrier-protein. This is Holo-[acyl-carrier-protein] synthase from Buchnera aphidicola subsp. Schizaphis graminum (strain Sg).